Consider the following 303-residue polypeptide: Golgi to ER traffic protein 2 (303 aa).

Over 1 to 168 (MSEQPLSQDE…NAYNIYQQRL (168 aa)) the chain is Cytoplasmic. The interval 19 to 86 (RQAKMARGKA…DPEDDPDLMD (68 aa)) is disordered. Residues 31–48 (RLNNILSQGSSVKGTTDP) show a composition bias toward polar residues. A helical transmembrane segment spans residues 169-189 (WKFRFSIIRFAAVLTNFFYHY). Topologically, residues 190–216 (LTIQDYSFTSSPHFYVRALAPHPAVNS) are lumenal. Residues 217-236 (FITWFSTCEVAILASFYLIT) form a helical membrane-spanning segment. Topologically, residues 237–280 (SKNNIYANASDGNLLLKGISMGAMVLPQLRAYQPLVIRLAHYWE) are cytoplasmic. Residues 281 to 301 (VFSMLLGDIFLVVVLFGLVSI) traverse the membrane as a helical segment. The Lumenal portion of the chain corresponds to 302 to 303 (YN).

This sequence belongs to the GET2 family. As to quaternary structure, component of the Golgi to ER traffic (GET) complex, which is composed of GET1, GET2 and GET3. Within the complex, GET1 and GET2 form a heterotetramer which is stabilized by phosphatidylinositol binding and which binds to the GET3 homodimer.

The protein resides in the endoplasmic reticulum membrane. The protein localises to the golgi apparatus membrane. Required for the post-translational delivery of tail-anchored (TA) proteins to the endoplasmic reticulum. Together with GET1, acts as a membrane receptor for soluble GET3, which recognizes and selectively binds the transmembrane domain of TA proteins in the cytosol. The GET complex cooperates with the HDEL receptor ERD2 to mediate the ATP-dependent retrieval of resident ER proteins that contain a C-terminal H-D-E-L retention signal from the Golgi to the ER. In Debaryomyces hansenii (strain ATCC 36239 / CBS 767 / BCRC 21394 / JCM 1990 / NBRC 0083 / IGC 2968) (Yeast), this protein is Golgi to ER traffic protein 2.